Consider the following 355-residue polypeptide: Nuclear speckle splicing regulatory protein 1 homolog (355 aa).

The segment at 1–57 is disordered; it reads MSGTGFRYGLNVMKKKKPNESSNRITFTEDDSSSSEQEHAPIPNSFSSQITAASDAS. A compositionally biased stretch (polar residues) spans 44-54; that stretch reads NSFSSQITAAS. Positions 99–162 form a coiled coil; the sequence is MENLIESAKK…EDRKEEDEKS (64 aa). Disordered stretches follow at residues 253-292 and 325-355; these read SANN…HGTY and KIHA…ATNP. The span at 280–289 shows a compositional bias: basic and acidic residues; the sequence is YHQDRPDKRH. The stretch at 293-326 forms a coiled coil; the sequence is SLEEIDKQRKEFENRQRLQKEKEFQKSREAALKI. A compositionally biased stretch (polar residues) spans 329–339; sequence SRNTTETQVQS. Basic residues predominate over residues 346–355; the sequence is QRKKKAATNP.

The protein belongs to the NSRP1 family.

In Schizosaccharomyces pombe (strain 972 / ATCC 24843) (Fission yeast), this protein is Nuclear speckle splicing regulatory protein 1 homolog.